A 606-amino-acid polypeptide reads, in one-letter code: Armadillo repeat-containing X-linked protein 5 (606 aa).

A disordered region spans residues 1 to 85 (MIGSKTKRKA…KVKKKKDKTN (85 aa)). Positions 15–26 (GASSKPGTNSPA) are enriched in polar residues. The span at 40–59 (VKAEPKEEWGNQAEARDEAV) shows a compositional bias: basic and acidic residues. 4 ARM repeats span residues 349-388 (CKSRTFSLEPVDFDKLVALLKLTRDPFIHEIATMIMGISP), 470-509 (VKFDYHHVVIYYVRYFISLLNKGSVKIKFQILRVLLCLSK), 511-551 (QANT…NINF), and 568-606 (SELISIFREAKEFDQKLQDLTDHSDPDVRDKVIRLILKL).

It belongs to the eutherian X-chromosome-specific Armcx family. In terms of tissue distribution, highly expressed in the developing neural tissues, neural crest derivatives and hind limbs.

The polypeptide is Armadillo repeat-containing X-linked protein 5 (Armcx5) (Mus musculus (Mouse)).